Reading from the N-terminus, the 466-residue chain is Ceramide glucosyltransferase 1 (466 aa).

A helical membrane pass occupies residues 70-90 (LALSGCIFVSVLYLVHIIAFF). Asp148 is a short sequence motif (D1). A short sequence motif (D2) is located at residue Asp200. A short sequence motif (D3) is located at residue Asp294. Residue Asp294 is the Proton acceptor of the active site. The (Q/R)XXRW signature appears at 330 to 334 (RIGRW). Helical transmembrane passes span 354–374 (CVTS…YSVY) and 403–423 (TPFL…FIFI).

This sequence belongs to the glycosyltransferase 2 family. As to expression, expressed in excretory canals, pharyngeal intestinal valve, intestine and intestinal rectal valve.

It is found in the membrane. The enzyme catalyses an N-acylsphing-4-enine + UDP-alpha-D-glucose = a beta-D-glucosyl-(1&lt;-&gt;1')-N-acylsphing-4-enine + UDP + H(+). It carries out the reaction an N-acyl-15-methylhexadecasphing-4-enine + UDP-alpha-D-glucose = an N-acyl-1-beta-D-glucosyl-15-methylhexadecasphing-4-enine + UDP + H(+). Its pathway is lipid metabolism; sphingolipid metabolism. Catalyzes the first glycosylation step in glycosphingolipid biosynthesis, the transfer of glucose to ceramide to produce glucosylceramides (GlcCer). GlcCer are known to contribute to the physical properties and physiological functions of membranes and may regulate signal transduction. Only branched-chain sphingoid bases like 15-methylhexadecasphing-4-enine are used for generating complex sphingolipids in Caenorhabditis elegans. Together with cgt-3, plays a role in the trafficking of proteins such as mig-14 to the cell membrane in intestinal cells. In Caenorhabditis elegans, this protein is Ceramide glucosyltransferase 1.